A 281-amino-acid chain; its full sequence is Aldo-keto reductase MAP_3007 (281 aa).

Residue Tyr56 is the Proton donor of the active site. NADPH-binding residues include Leu196, Ile234, Arg236, Ser237, Ala238, Ser245, and Arg272.

This sequence belongs to the aldo/keto reductase family.

The polypeptide is Aldo-keto reductase MAP_3007 (Mycolicibacterium paratuberculosis (strain ATCC BAA-968 / K-10) (Mycobacterium paratuberculosis)).